We begin with the raw amino-acid sequence, 133 residues long: NLP effector protein 14 (133 aa).

The Conserved undecapeptide motifI I signature appears at M1 to D9. The short motif at G16–E22 is the Hepta-peptide GHRHDWE motif II element.

The protein belongs to the Necrosis inducing protein (NPP1) family.

The protein localises to the secreted. In terms of biological role, secreted effector that contributes strongly to virulence during infection by P.capsici. Causes large necrotic areas in both host C.annuum and non-host N.benthamiana. The polypeptide is NLP effector protein 14 (Phytophthora capsici).